Reading from the N-terminus, the 140-residue chain is Callisulfakinin (140 aa).

The N-terminal stretch at 1–30 is a signal peptide; sequence MYSQQRIFNSKYFIFFIAVLSIFWLPTMSA. Positions 31-109 are excised as a propeptide; that stretch reads RNLENSKNEN…LEYEDEDRSK (79 aa). Sulfotyrosine is present on Tyr114. Phe119 carries the post-translational modification Phenylalanine amide. Tyr131 carries the post-translational modification Sulfotyrosine. A Phenylalanine amide modification is found at Phe136. Positions 139–140 are excised as a propeptide; the sequence is SI.

The protein belongs to the gastrin/cholecystokinin family. In brain, it is specifically expressed in four pairs of neurons. Not expressed in other cells of the brain and in the thoracico-abdominal ganglion.

It is found in the secreted. Functionally, callisulfakinin I is a neuropeptide. The existence of Callisulfakinin II is uncertain. The polypeptide is Callisulfakinin (Calliphora vomitoria (Blue bottle fly)).